The chain runs to 473 residues: Mitochondrial adenyl nucleotide antiporter SLC25A24-A (473 aa).

Residues 1–173 are regulatory N-terminal domain; sequence MLEQVQKFLL…RFWKHSTVLD (173 aa). Topologically, residues 1 to 197 are mitochondrial intermembrane; it reads MLEQVQKFLL…EKKTGQWWKH (197 aa). EF-hand domains follow at residues 19-54, 55-88, 86-121, and 122-157; these read DSHT…MGMA, VGKG…EEHE, EHEK…LGIN, and ISLD…NPAD. Asp-32, Asn-34, Asp-36, Lys-38, Glu-43, Asp-68, Asn-70, Asp-72, His-74, Glu-79, Asp-99, Asn-101, Asp-103, Lys-105, Glu-110, Asp-135, Asp-137, Thr-139, Thr-141, and Glu-146 together coordinate Ca(2+). The segment at 159–168 is linker region; it reads IQQIIRFWKH. Residues 174–473 form a C-terminal transmembrane transporter domain region; that stretch reads IGDSLTIPDE…YEKMKIQLGI (300 aa). 3 Solcar repeats span residues 192-277, 285-370, and 382-470; these read GQWW…YKKL, LGTA…LKNY, and PGVL…MKIQ. Residues 198–215 traverse the membrane as a helical segment; that stretch reads LLAGGMAGAVSRTGTAPL. The Mitochondrial matrix segment spans residues 216 to 251; sequence DRLKVMMQVHGTKGNSNIITGLKQMVKEGGVRSLWR. A helical membrane pass occupies residues 252–271; it reads GNGVNVIKIAPETAMKFWAY. Over 272-294 the chain is Mitochondrial intermembrane; that stretch reads EQYKKLFTSESGKLGTAERFIAG. The chain crosses the membrane as a helical span at residues 295–308; the sequence is SLAGATAQTSIYPM. The Mitochondrial matrix segment spans residues 309 to 344; that stretch reads EVLKTRLAVGKTGQYSGMFDCAKKIMQKEGILAFYK. Residues 345–364 form a helical membrane-spanning segment; sequence GYIPNILGIIPYAGIDLAIY. The Mitochondrial intermembrane segment spans residues 365–387; the sequence is ETLKNYWLQNYAKDSANPGVLVL. A helical membrane pass occupies residues 388–405; it reads LGCGTVSSTCGQLASYPL. The Mitochondrial matrix segment spans residues 406–444; sequence ALIRTRMQAQASIEGAPQLNMGGLFRKIVAKEGFFGLYT. Residues 445–464 form a helical membrane-spanning segment; that stretch reads GIAPNFLKVLPAVSISYVVY. Topologically, residues 465–473 are mitochondrial intermembrane; it reads EKMKIQLGI.

Belongs to the mitochondrial carrier (TC 2.A.29) family. Monomer.

It localises to the mitochondrion inner membrane. The enzyme catalyses Mg(2+)(out) + phosphate(in) + ATP(out) = Mg(2+)(in) + phosphate(out) + ATP(in). The catalysed reaction is ADP(out) + phosphate(in) + H(+)(out) = ADP(in) + phosphate(out) + H(+)(in). It catalyses the reaction AMP(out) + phosphate(in) = AMP(in) + phosphate(out). It carries out the reaction phosphate(in) + ATP(out) + 2 H(+)(out) = phosphate(out) + ATP(in) + 2 H(+)(in). The enzyme catalyses dADP(in) + ADP(out) = dADP(out) + ADP(in). The catalysed reaction is Mg(2+)(in) + ADP(out) + ATP(in) + H(+)(out) = Mg(2+)(out) + ADP(in) + ATP(out) + H(+)(in). It catalyses the reaction ADP(out) + diphosphate(in) = ADP(in) + diphosphate(out). It carries out the reaction dAMP(in) + ADP(out) + H(+)(out) = dAMP(out) + ADP(in) + H(+)(in). The enzyme catalyses 3'-AMP(in) + ADP(out) + H(+)(out) = 3'-AMP(out) + ADP(in) + H(+)(in). The catalysed reaction is dAMP(out) + phosphate(in) = dAMP(in) + phosphate(out). It catalyses the reaction 3'-AMP(out) + phosphate(in) = 3'-AMP(in) + phosphate(out). It carries out the reaction dADP(out) + phosphate(in) + H(+)(out) = dADP(in) + phosphate(out) + H(+)(in). With respect to regulation, activated by an increase in cytosolic calcium levels that induce a conformational change of the N-terminal regulatory domain, uncapping the channel and allowing transport. Inhibited by bathophenanthroline, mersalyl, p-hydroxymercuribenzoate, bromcresol purple and tannic acid. Electroneutral antiporter that mediates the transport of adenyl nucleotides through the inner mitochondrial membrane. Originally identified as an ATP-magnesium/inorganic phosphate antiporter, it also acts as a broad specificity adenyl nucleotide antiporter. By regulating the mitochondrial matrix adenyl nucleotide pool could adapt to changing cellular energetic demands and indirectly regulate adenyl nucleotide-dependent metabolic pathways. This Xenopus laevis (African clawed frog) protein is Mitochondrial adenyl nucleotide antiporter SLC25A24-A (slc25a24-a).